A 248-amino-acid chain; its full sequence is Orotidine 5'-phosphate decarboxylase (248 aa).

Substrate-binding positions include Asp-22, Lys-44, 71 to 80 (DLKFHDIPNT), Thr-131, Arg-192, Gln-201, Gly-221, and Arg-222. Residue Lys-73 is the Proton donor of the active site.

The protein belongs to the OMP decarboxylase family. Type 1 subfamily. In terms of assembly, homodimer.

The enzyme catalyses orotidine 5'-phosphate + H(+) = UMP + CO2. It functions in the pathway pyrimidine metabolism; UMP biosynthesis via de novo pathway; UMP from orotate: step 2/2. Its function is as follows. Catalyzes the decarboxylation of orotidine 5'-monophosphate (OMP) to uridine 5'-monophosphate (UMP). The protein is Orotidine 5'-phosphate decarboxylase of Photorhabdus laumondii subsp. laumondii (strain DSM 15139 / CIP 105565 / TT01) (Photorhabdus luminescens subsp. laumondii).